The sequence spans 112 residues: MGNTMCPKMESAFSLLGKRWNGLIIHVLMDGPKRFKEITETIPMISQKMLAERLKELEQNEIVERQVLPETPVKVIYTLTEKGTALQAVFQEMQAWADQFCEPGDTVCEEEK.

The 100-residue stretch at 6–105 folds into the HTH hxlR-type domain; it reads CPKMESAFSL…WADQFCEPGD (100 aa).

In terms of biological role, negatively regulates yodC and azoR1 which may contribute to the degradation of aromatic compounds. Probably positively regulates the catechol-specific transcription of mhqNOP, mhqED, and mhqA. This Bacillus subtilis (strain 168) protein is HTH-type transcriptional regulator YodB (yodB).